A 230-amino-acid chain; its full sequence is uncharacterized protein (230 aa).

A helical transmembrane segment spans residues 7–23; the sequence is LFTASILSLGYLVFICG. Residues 27-230 form a disordered region; sequence KPKPTASTES…VKTEGTLKKN (204 aa). Over residues 50–59 the composition is skewed to low complexity; it reads AVPQKPAAPA. Over residues 60–83 the composition is skewed to basic and acidic residues; sequence AEEKAPVDPKDPKSKDVDEAKKPD. Basic residues predominate over residues 101 to 112; that stretch reads KKSKKSEKSKKK. The segment covering 113-173 has biased composition (basic and acidic residues); the sequence is KTEEKVMSED…KEKSKDETVP (61 aa). A compositionally biased stretch (acidic residues) spans 199–210; that stretch reads ETDEFPTIDEDA. The segment covering 211–230 has biased composition (basic and acidic residues); it reads EKTKKTEKKDVKTEGTLKKN.

Its subcellular location is the membrane. This is an uncharacterized protein from Caenorhabditis elegans.